The primary structure comprises 181 residues: Large ribosomal subunit protein uL6 (181 aa).

This sequence belongs to the universal ribosomal protein uL6 family. In terms of assembly, part of the 50S ribosomal subunit.

Functionally, this protein binds to the 23S rRNA, and is important in its secondary structure. It is located near the subunit interface in the base of the L7/L12 stalk, and near the tRNA binding site of the peptidyltransferase center. This chain is Large ribosomal subunit protein uL6, found in Phytoplasma mali (strain AT).